We begin with the raw amino-acid sequence, 497 residues long: Glycerol kinase (497 aa).

Thr-21 serves as a coordination point for ADP. The ATP site is built by Thr-21 and Thr-22. Position 21 (Thr-21) interacts with sn-glycerol 3-phosphate. Residue Arg-25 participates in ADP binding. Arg-88, Glu-89, Tyr-140, and Asp-244 together coordinate sn-glycerol 3-phosphate. The glycerol site is built by Arg-88, Glu-89, Tyr-140, Asp-244, and Gln-245. ADP is bound by residues Thr-266 and Gly-309. ATP-binding residues include Thr-266, Gly-309, Gln-313, and Gly-410. Positions 410 and 414 each coordinate ADP.

The protein belongs to the FGGY kinase family.

It carries out the reaction glycerol + ATP = sn-glycerol 3-phosphate + ADP + H(+). Its pathway is polyol metabolism; glycerol degradation via glycerol kinase pathway; sn-glycerol 3-phosphate from glycerol: step 1/1. Inhibited by fructose 1,6-bisphosphate (FBP). Its function is as follows. Key enzyme in the regulation of glycerol uptake and metabolism. Catalyzes the phosphorylation of glycerol to yield sn-glycerol 3-phosphate. The sequence is that of Glycerol kinase from Gloeobacter violaceus (strain ATCC 29082 / PCC 7421).